Here is a 93-residue protein sequence, read N- to C-terminus: Putative membrane protein insertion efficiency factor (93 aa).

The segment at 72 to 93 (VPEHFPSWRGPHPKTPSRKTPE) is disordered. Basic residues predominate over residues 82–93 (PHPKTPSRKTPE).

Belongs to the UPF0161 family.

The protein localises to the cell membrane. Its function is as follows. Could be involved in insertion of integral membrane proteins into the membrane. This chain is Putative membrane protein insertion efficiency factor, found in Deinococcus geothermalis (strain DSM 11300 / CIP 105573 / AG-3a).